We begin with the raw amino-acid sequence, 175 residues long: Interleukin-10 (175 aa).

An N-terminal signal peptide occupies residues 1-18; it reads MPSSALLYCLIFLAGVAA. Disulfide bonds link cysteine 26–cysteine 122 and cysteine 76–cysteine 128. Asparagine 130 is a glycosylation site (N-linked (GlcNAc...) asparagine).

The protein belongs to the IL-10 family. In terms of assembly, homodimer. Interacts with IL10RA and IL10RB.

The protein resides in the secreted. Major immune regulatory cytokine that acts on many cells of the immune system where it has profound anti-inflammatory functions, limiting excessive tissue disruption caused by inflammation. Mechanistically, IL10 binds to its heterotetrameric receptor comprising IL10RA and IL10RB leading to JAK1 and STAT2-mediated phosphorylation of STAT3. In turn, STAT3 translocates to the nucleus where it drives expression of anti-inflammatory mediators. Targets antigen-presenting cells (APCs) such as macrophages and monocytes and inhibits their release of pro-inflammatory cytokines including granulocyte-macrophage colony-stimulating factor /GM-CSF, granulocyte colony-stimulating factor/G-CSF, IL-1 alpha, IL-1 beta, IL-6, IL-8 and TNF-alpha. Also interferes with antigen presentation by reducing the expression of MHC-class II and co-stimulatory molecules, thereby inhibiting their ability to induce T cell activation. In addition, controls the inflammatory response of macrophages by reprogramming essential metabolic pathways including mTOR signaling. This chain is Interleukin-10 (IL10), found in Sus scrofa (Pig).